Consider the following 23-residue polypeptide: ACGSCRKKCKGSGKCINGRCKCY.

3 disulfides stabilise this stretch: Cys2/Cys15, Cys5/Cys20, and Cys9/Cys22. The interaction with Ca(2+)-activated K(+) channels stretch occupies residues 13–20 (GKCINGRC).

As to expression, expressed by the venom gland.

Its subcellular location is the secreted. Blocks reversibly Shaker B potassium channels. Also displaces binding of noxiustoxin to mouse brain synaptosome membranes. The polypeptide is Potassium channel toxin alpha-KTx 13.1 (Tityus obscurus (Amazonian scorpion)).